Reading from the N-terminus, the 329-residue chain is Phenylalanine--tRNA ligase alpha subunit (329 aa).

A Mg(2+)-binding site is contributed by glutamate 253.

This sequence belongs to the class-II aminoacyl-tRNA synthetase family. Phe-tRNA synthetase alpha subunit type 1 subfamily. Tetramer of two alpha and two beta subunits. The cofactor is Mg(2+).

The protein resides in the cytoplasm. It carries out the reaction tRNA(Phe) + L-phenylalanine + ATP = L-phenylalanyl-tRNA(Phe) + AMP + diphosphate + H(+). The polypeptide is Phenylalanine--tRNA ligase alpha subunit (Teredinibacter turnerae (strain ATCC 39867 / T7901)).